The primary structure comprises 716 residues: Fatty acid oxidation complex subunit alpha (716 aa).

The enoyl-CoA hydratase/isomerase stretch occupies residues 1-189 (MIYQSPTIQV…KVGAVDAVVA (189 aa)). Asp296 provides a ligand contact to substrate. Positions 311–716 (KAVNSAAVLG…AANNGSYYQA (406 aa)) are 3-hydroxyacyl-CoA dehydrogenase. Residues Met324, Asp343, 400–402 (VVE), Lys407, and Ser429 contribute to the NAD(+) site. His450 serves as the catalytic For 3-hydroxyacyl-CoA dehydrogenase activity. Asn453 is an NAD(+) binding site. Asn500 and Tyr660 together coordinate substrate.

This sequence in the N-terminal section; belongs to the enoyl-CoA hydratase/isomerase family. In the C-terminal section; belongs to the 3-hydroxyacyl-CoA dehydrogenase family. Heterotetramer of two alpha chains (FadB) and two beta chains (FadA).

The catalysed reaction is a (3S)-3-hydroxyacyl-CoA + NAD(+) = a 3-oxoacyl-CoA + NADH + H(+). It carries out the reaction a (3S)-3-hydroxyacyl-CoA = a (2E)-enoyl-CoA + H2O. It catalyses the reaction a 4-saturated-(3S)-3-hydroxyacyl-CoA = a (3E)-enoyl-CoA + H2O. The enzyme catalyses (3S)-3-hydroxybutanoyl-CoA = (3R)-3-hydroxybutanoyl-CoA. The catalysed reaction is a (3Z)-enoyl-CoA = a 4-saturated (2E)-enoyl-CoA. It carries out the reaction a (3E)-enoyl-CoA = a 4-saturated (2E)-enoyl-CoA. The protein operates within lipid metabolism; fatty acid beta-oxidation. In terms of biological role, involved in the aerobic and anaerobic degradation of long-chain fatty acids via beta-oxidation cycle. Catalyzes the formation of 3-oxoacyl-CoA from enoyl-CoA via L-3-hydroxyacyl-CoA. It can also use D-3-hydroxyacyl-CoA and cis-3-enoyl-CoA as substrate. The sequence is that of Fatty acid oxidation complex subunit alpha from Shewanella oneidensis (strain ATCC 700550 / JCM 31522 / CIP 106686 / LMG 19005 / NCIMB 14063 / MR-1).